The chain runs to 93 residues: Small ribosomal subunit protein uS19 (93 aa).

The protein belongs to the universal ribosomal protein uS19 family.

Its function is as follows. Protein S19 forms a complex with S13 that binds strongly to the 16S ribosomal RNA. The protein is Small ribosomal subunit protein uS19 of Leptospira borgpetersenii serovar Hardjo-bovis (strain JB197).